The following is a 286-amino-acid chain: MKIAVIGLGNMGQPIARNVLQAGYELTVYNRTKQKTEDLVTEGAQAADTPRLAAKSADIVITMLADDDSVSTVTFGEDGLLEGLAENGIHISMSTISVEFSEKLAAAHAEKGQFFLAAPVLGRPDAAAKAALRIITAGPAEAKQAAKPLLDSLSQQIFDVGEESKTANAAKISINFLLVSMLEALSESFLMMEKYGLEQKQFLEIASALFGSPVYQNYGTIMAEQKFEPAGFKMSLGLKDTNLALAAAKRVSANLPLAELAKSHFESGIEKGFGDLDWAALIKCIK.

NAD(+) is bound by residues 4–18 and T95; that span reads AVIGLGNMGQPIARN. K171 is an active-site residue. K239 contacts NAD(+).

It belongs to the HIBADH-related family.

This is an uncharacterized protein from Bacillus subtilis (strain 168).